Reading from the N-terminus, the 340-residue chain is Ribose-phosphate pyrophosphokinase (340 aa).

Residues 47 to 49 (NGE) and 106 to 107 (RQ) each bind ATP. Mg(2+)-binding residues include H140 and D182. K206 is an active-site residue. D-ribose 5-phosphate-binding positions include R208, D234, and 238–242 (DTAGT).

It belongs to the ribose-phosphate pyrophosphokinase family. Class I subfamily. Homohexamer. Mg(2+) is required as a cofactor.

Its subcellular location is the cytoplasm. The catalysed reaction is D-ribose 5-phosphate + ATP = 5-phospho-alpha-D-ribose 1-diphosphate + AMP + H(+). It functions in the pathway metabolic intermediate biosynthesis; 5-phospho-alpha-D-ribose 1-diphosphate biosynthesis; 5-phospho-alpha-D-ribose 1-diphosphate from D-ribose 5-phosphate (route I): step 1/1. Its function is as follows. Involved in the biosynthesis of the central metabolite phospho-alpha-D-ribosyl-1-pyrophosphate (PRPP) via the transfer of pyrophosphoryl group from ATP to 1-hydroxyl of ribose-5-phosphate (Rib-5-P). This chain is Ribose-phosphate pyrophosphokinase, found in Bifidobacterium longum (strain NCC 2705).